A 379-amino-acid chain; its full sequence is Dual-specificity RNA methyltransferase RlmN (379 aa).

Catalysis depends on E95, which acts as the Proton acceptor. The Radical SAM core domain occupies 101-345; sequence EETRGTLCVS…TTVRKTRGDD (245 aa). An intrachain disulfide couples C108 to C350. [4Fe-4S] cluster contacts are provided by C115, C119, and C122. Residues 176 to 177, S208, 230 to 232, and N307 each bind S-adenosyl-L-methionine; these read GE and SLH. The active-site S-methylcysteine intermediate is the C350.

Belongs to the radical SAM superfamily. RlmN family. Requires [4Fe-4S] cluster as cofactor.

Its subcellular location is the cytoplasm. It catalyses the reaction adenosine(2503) in 23S rRNA + 2 reduced [2Fe-2S]-[ferredoxin] + 2 S-adenosyl-L-methionine = 2-methyladenosine(2503) in 23S rRNA + 5'-deoxyadenosine + L-methionine + 2 oxidized [2Fe-2S]-[ferredoxin] + S-adenosyl-L-homocysteine. The enzyme catalyses adenosine(37) in tRNA + 2 reduced [2Fe-2S]-[ferredoxin] + 2 S-adenosyl-L-methionine = 2-methyladenosine(37) in tRNA + 5'-deoxyadenosine + L-methionine + 2 oxidized [2Fe-2S]-[ferredoxin] + S-adenosyl-L-homocysteine. In terms of biological role, specifically methylates position 2 of adenine 2503 in 23S rRNA and position 2 of adenine 37 in tRNAs. m2A2503 modification seems to play a crucial role in the proofreading step occurring at the peptidyl transferase center and thus would serve to optimize ribosomal fidelity. The sequence is that of Dual-specificity RNA methyltransferase RlmN from Burkholderia cenocepacia (strain ATCC BAA-245 / DSM 16553 / LMG 16656 / NCTC 13227 / J2315 / CF5610) (Burkholderia cepacia (strain J2315)).